The following is a 203-amino-acid chain: Probable cytochrome c oxidase subunit 3 (203 aa).

5 helical membrane passes run 30–50, 71–91, 96–116, 143–163, and 179–199; these read IVWLSSELMFFAGLFAFYFSA, VPVTLVLIASSFTCQMGVFAA, IFGLRRWYVITFLMGLFFVLG, ATGFHGLHVTGGLIAFIFLLV, and IVVSYYWHFVDIVWIALFTVI.

This sequence belongs to the cytochrome c oxidase subunit 3 family.

Its subcellular location is the cell membrane. It carries out the reaction 4 Fe(II)-[cytochrome c] + O2 + 8 H(+)(in) = 4 Fe(III)-[cytochrome c] + 2 H2O + 4 H(+)(out). This chain is Probable cytochrome c oxidase subunit 3 (ctaE), found in Mycobacterium bovis (strain ATCC BAA-935 / AF2122/97).